The chain runs to 1103 residues: Voltage-dependent calcium channel subunit alpha-2/delta-1 (1103 aa).

Residues 1–24 (MAAGCLLALTLTLFQSLLIGPSSE) form the signal peptide. Topologically, residues 25–1073 (EPFPSAVTIK…VLEDYTDCGG (1049 aa)) are extracellular. An N-linked (GlcNAc...) asparagine glycan is attached at asparagine 92. At serine 119 the chain carries Phosphoserine. 2 N-linked (GlcNAc...) asparagine glycosylation sites follow: asparagine 136 and asparagine 184. One can recognise a VWFA domain in the interval 253 to 430 (DMLILVDVSG…INTQEYLDVL (178 aa)). A divalent metal cation-binding residues include aspartate 259, serine 261, and serine 263. An MIDAS-like motif motif is present at residues 259–263 (DVSGS). N-linked (GlcNAc...) asparagine glycosylation is found at asparagine 324, asparagine 348, asparagine 468, asparagine 475, asparagine 604, asparagine 613, asparagine 675, asparagine 781, asparagine 824, asparagine 888, asparagine 895, asparagine 985, and asparagine 998. An intrachain disulfide couples cysteine 404 to cysteine 1059. Positions 446 to 556 (WTNVYLDALE…NIQNPKSQEP (111 aa)) constitute a Cache domain. A helical membrane pass occupies residues 1074 to 1094 (VSGLNPSLWYIIGIQFLLLWL). The Cytoplasmic portion of the chain corresponds to 1095–1103 (VSGSTHRLL).

This sequence belongs to the calcium channel subunit alpha-2/delta family. Dimer formed of alpha-2-1 and delta-1 chains; disulfide-linked. Voltage-dependent calcium channels are multisubunit complexes, consisting of alpha-1 (CACNA1), alpha-2 (CACNA2D), beta (CACNB) and delta (CACNA2D) subunits in a 1:1:1:1 ratio. In terms of processing, proteolytically processed into subunits alpha-2-1 and delta-1 that are disulfide-linked. As to expression, isoform 1 is expressed in skeletal muscle. Isoform 2 is expressed in the central nervous system. Isoform 2, isoform 4 and isoform 5 are expressed in neuroblastoma cells. Isoform 3, isoform 4 and isoform 5 are expressed in the aorta.

It localises to the membrane. Its subcellular location is the cell membrane. Its function is as follows. The alpha-2/delta subunit of voltage-dependent calcium channels regulates calcium current density and activation/inactivation kinetics of the calcium channel. Plays an important role in excitation-contraction coupling. The protein is Voltage-dependent calcium channel subunit alpha-2/delta-1 (CACNA2D1) of Homo sapiens (Human).